We begin with the raw amino-acid sequence, 500 residues long: Archaeal-type glutamate synthase [NADPH] (500 aa).

4Fe-4S ferredoxin-type domains are found at residues 7–38 and 40–69; these read SKFI…YDED and DQIK…VRNN. Residues C18, C21, C24, C28, C49, C52, C55, and C59 each coordinate [4Fe-4S] cluster.

This sequence belongs to the glutamate synthase family. FMN is required as a cofactor.

The catalysed reaction is 2 L-glutamate + NADP(+) = L-glutamine + 2-oxoglutarate + NADPH + H(+). The polypeptide is Archaeal-type glutamate synthase [NADPH] (Dehalococcoides mccartyi (strain ATCC BAA-2266 / KCTC 15142 / 195) (Dehalococcoides ethenogenes (strain 195))).